We begin with the raw amino-acid sequence, 265 residues long: Phosphate import ATP-binding protein PstB (265 aa).

In terms of domain architecture, ABC transporter spans 18–260; it reads IAAKGVNVYY…PEDPRTESYI (243 aa). ATP is bound at residue 50–57; that stretch reads GPSGCGKS.

It belongs to the ABC transporter superfamily. Phosphate importer (TC 3.A.1.7) family. In terms of assembly, the complex is composed of two ATP-binding proteins (PstB), two transmembrane proteins (PstC and PstA) and a solute-binding protein (PstS).

The protein localises to the cell inner membrane. It catalyses the reaction phosphate(out) + ATP + H2O = ADP + 2 phosphate(in) + H(+). In terms of biological role, part of the ABC transporter complex PstSACB involved in phosphate import. Responsible for energy coupling to the transport system. The chain is Phosphate import ATP-binding protein PstB from Ruegeria sp. (strain TM1040) (Silicibacter sp.).